The chain runs to 371 residues: Succinyl-diaminopimelate desuccinylase (371 aa).

Histidine 68 provides a ligand contact to Zn(2+). Aspartate 70 is a catalytic residue. Residue aspartate 99 coordinates Zn(2+). The active-site Proton acceptor is glutamate 130. The Zn(2+) site is built by glutamate 131, glutamate 159, and histidine 344.

This sequence belongs to the peptidase M20A family. DapE subfamily. Homodimer. The cofactor is Zn(2+). Co(2+) is required as a cofactor.

It carries out the reaction N-succinyl-(2S,6S)-2,6-diaminopimelate + H2O = (2S,6S)-2,6-diaminopimelate + succinate. It functions in the pathway amino-acid biosynthesis; L-lysine biosynthesis via DAP pathway; LL-2,6-diaminopimelate from (S)-tetrahydrodipicolinate (succinylase route): step 3/3. Its function is as follows. Catalyzes the hydrolysis of N-succinyl-L,L-diaminopimelic acid (SDAP), forming succinate and LL-2,6-diaminopimelate (DAP), an intermediate involved in the bacterial biosynthesis of lysine and meso-diaminopimelic acid, an essential component of bacterial cell walls. The polypeptide is Succinyl-diaminopimelate desuccinylase (Acidiphilium cryptum (strain JF-5)).